The sequence spans 256 residues: MNRINQLFNSNKKDILSIYFCAGNPTLDGTVNVIRTLEKHGVSMIEVGIPFSDPMADGIVIQNAATQALRNGMSLKILFEQLRNIRQEVSIPLVFMGYLNPIMQFGFENFCRKCVECGIDGVIIPDLPFRDYQDHYRIIAERYGIKVIMLITPETSEERVREIDAHTDGFIYMVSSAATTGAQQDFNEQKRAYFKKIEDMNLRNPLMVGFGISNKATFQAACEHASGAIIGSRFVTLLEEEKDPEKAILKLKDALK.

Catalysis depends on proton acceptor residues Glu-46 and Asp-57.

Belongs to the TrpA family. In terms of assembly, tetramer of two alpha and two beta chains.

The catalysed reaction is (1S,2R)-1-C-(indol-3-yl)glycerol 3-phosphate + L-serine = D-glyceraldehyde 3-phosphate + L-tryptophan + H2O. It functions in the pathway amino-acid biosynthesis; L-tryptophan biosynthesis; L-tryptophan from chorismate: step 5/5. In terms of biological role, the alpha subunit is responsible for the aldol cleavage of indoleglycerol phosphate to indole and glyceraldehyde 3-phosphate. The protein is Tryptophan synthase alpha chain of Bacteroides thetaiotaomicron (strain ATCC 29148 / DSM 2079 / JCM 5827 / CCUG 10774 / NCTC 10582 / VPI-5482 / E50).